The following is a 324-amino-acid chain: Mating-type protein A-3 (324 aa).

Positions Thr-147–Tyr-215 form a DNA-binding region, HMG box.

Its subcellular location is the nucleus. In terms of biological role, required, together with mating-type protein A-2, for efficient ascospore formation. This chain is Mating-type protein A-3 (mtA-3), found in Neurospora crassa (strain ATCC 24698 / 74-OR23-1A / CBS 708.71 / DSM 1257 / FGSC 987).